Consider the following 270-residue polypeptide: Protein ABHD14A (270 aa).

The chain crosses the membrane as a helical; Signal-anchor for type II membrane protein span at residues L9–M29. A glycan (N-linked (GlcNAc...) asparagine) is linked at N61. Active-site charge relay system residues include S170 and D221. N-linked (GlcNAc...) asparagine glycosylation is present at N237. The active-site Charge relay system is H248.

Belongs to the AB hydrolase superfamily. ABHD14 family.

It is found in the cytoplasm. The protein resides in the membrane. Its function is as follows. Possible role in granule neuron development. This is Protein ABHD14A from Danio rerio (Zebrafish).